A 201-amino-acid polypeptide reads, in one-letter code: Prostamide/prostaglandin F synthase (201 aa).

It belongs to the peroxiredoxin-like PRXL2 family. Prostamide/prostaglandin F synthase subfamily.

The protein resides in the cytoplasm. Its subcellular location is the cytosol. It catalyses the reaction prostaglandin H2 + [thioredoxin]-dithiol = prostaglandin F2alpha + [thioredoxin]-disulfide. The catalysed reaction is prostamide F2alpha + [thioredoxin]-disulfide = prostamide H2 + [thioredoxin]-dithiol. Catalyzes the reduction of prostaglandin-ethanolamide H(2) (prostamide H(2)) to prostamide F(2alpha) with NADPH as proton donor. Also able to reduce prostaglandin H(2) to prostaglandin F(2alpha). The protein is Prostamide/prostaglandin F synthase (prxl2b) of Aquarana catesbeiana (American bullfrog).